A 323-amino-acid chain; its full sequence is rRNA 2'-O-methyltransferase fibrillarin (323 aa).

A disordered region spans residues 1 to 80; sequence MSFRPGSRGG…GARGGAKGGA (80 aa). Residues 7–78 show a composition bias toward gly residues; sequence SRGGARGGRG…RGGARGGAKG (72 aa). Residues Arg8, Arg12, Arg15, Arg19, Arg25, Arg29, Arg35, Arg39, Arg43, Arg49, Arg53, Arg57, Arg61, Arg65, Arg69, and Arg73 each carry the asymmetric dimethylarginine modification. S-adenosyl-L-methionine is bound by residues 175-176, 194-195, 219-220, and 239-242; these read TS, EF, DA, and DVAQ.

The protein belongs to the methyltransferase superfamily. Fibrillarin family. As to quaternary structure, component of box C/D small nucleolar ribonucleoprotein (snoRNP) particles that contain SNU13, NOP1, SIK1/NOP56 and NOP58, plus a guide RNA. Post-translationally, by homology to other fibrillarins, some or all of the N-terminal domain arginines are modified to asymmetric dimethylarginine (DMA).

Its subcellular location is the nucleus. It is found in the nucleolus. It catalyses the reaction L-glutaminyl-[histone H2A] + S-adenosyl-L-methionine = N(5)-methyl-L-glutaminyl-[histone H2A] + S-adenosyl-L-homocysteine + H(+). Functionally, S-adenosyl-L-methionine-dependent methyltransferase that has the ability to methylate both RNAs and proteins. Involved in pre-rRNA processing. Utilizes the methyl donor S-adenosyl-L-methionine to catalyze the site-specific 2'-hydroxyl methylation of ribose moieties in pre-ribosomal RNA. Site specificity is provided by a guide RNA that base pairs with the substrate. Methylation occurs at a characteristic distance from the sequence involved in base pairing with the guide RNA. Also acts as a protein methyltransferase by mediating methylation of 'Gln-105' of histone H2A (H2AQ105me), a modification that impairs binding of the FACT complex and is specifically present at 35S ribosomal DNA locus. This Candida glabrata (strain ATCC 2001 / BCRC 20586 / JCM 3761 / NBRC 0622 / NRRL Y-65 / CBS 138) (Yeast) protein is rRNA 2'-O-methyltransferase fibrillarin (NOP1).